Reading from the N-terminus, the 161-residue chain is uncharacterized protein (161 aa).

Belongs to the mimivirus L761/L899 family.

Its subcellular location is the virion. This is an uncharacterized protein from Acanthamoeba polyphaga (Amoeba).